Reading from the N-terminus, the 265-residue chain is Indole-3-glycerol phosphate synthase (265 aa).

This sequence belongs to the TrpC family.

The catalysed reaction is 1-(2-carboxyphenylamino)-1-deoxy-D-ribulose 5-phosphate + H(+) = (1S,2R)-1-C-(indol-3-yl)glycerol 3-phosphate + CO2 + H2O. Its pathway is amino-acid biosynthesis; L-tryptophan biosynthesis; L-tryptophan from chorismate: step 4/5. The sequence is that of Indole-3-glycerol phosphate synthase from Syntrophobacter fumaroxidans (strain DSM 10017 / MPOB).